The primary structure comprises 269 residues: Tryptophan synthase alpha chain (269 aa).

Catalysis depends on proton acceptor residues glutamate 49 and aspartate 60.

Belongs to the TrpA family. In terms of assembly, tetramer of two alpha and two beta chains.

It catalyses the reaction (1S,2R)-1-C-(indol-3-yl)glycerol 3-phosphate + L-serine = D-glyceraldehyde 3-phosphate + L-tryptophan + H2O. It functions in the pathway amino-acid biosynthesis; L-tryptophan biosynthesis; L-tryptophan from chorismate: step 5/5. In terms of biological role, the alpha subunit is responsible for the aldol cleavage of indoleglycerol phosphate to indole and glyceraldehyde 3-phosphate. The protein is Tryptophan synthase alpha chain of Pseudomonas putida (strain W619).